A 671-amino-acid chain; its full sequence is DNA ligase (671 aa).

NAD(+)-binding positions include 32-36, 81-82, and Glu-113; these read DAEYD and SL. Lys-115 acts as the N6-AMP-lysine intermediate in catalysis. 4 residues coordinate NAD(+): Arg-136, Glu-173, Lys-290, and Lys-314. 4 residues coordinate Zn(2+): Cys-408, Cys-411, Cys-426, and Cys-432. The BRCT domain occupies 593–671; the sequence is EIDSPFAGKT…EAEMMRLLGE (79 aa).

Belongs to the NAD-dependent DNA ligase family. LigA subfamily. Requires Mg(2+) as cofactor. The cofactor is Mn(2+).

The catalysed reaction is NAD(+) + (deoxyribonucleotide)n-3'-hydroxyl + 5'-phospho-(deoxyribonucleotide)m = (deoxyribonucleotide)n+m + AMP + beta-nicotinamide D-nucleotide.. Functionally, DNA ligase that catalyzes the formation of phosphodiester linkages between 5'-phosphoryl and 3'-hydroxyl groups in double-stranded DNA using NAD as a coenzyme and as the energy source for the reaction. It is essential for DNA replication and repair of damaged DNA. This Klebsiella pneumoniae subsp. pneumoniae (strain ATCC 700721 / MGH 78578) protein is DNA ligase.